Consider the following 191-residue polypeptide: Small ribosomal subunit protein bS6 (191 aa).

Positions 168 to 191 (KVNLTRKPTPNKSSENKQKVEKQA) are disordered. The span at 181–191 (SENKQKVEKQA) shows a compositional bias: basic and acidic residues.

Belongs to the bacterial ribosomal protein bS6 family.

Binds together with bS18 to 16S ribosomal RNA. This Mycoplasmoides gallisepticum (strain R(low / passage 15 / clone 2)) (Mycoplasma gallisepticum) protein is Small ribosomal subunit protein bS6.